We begin with the raw amino-acid sequence, 523 residues long: UDP-glucuronosyltransferase 3A1 (523 aa).

Positions 1-22 are cleaved as a signal peptide; the sequence is MAGQQALLLFGFILPGLLFSEA. Topologically, residues 23–483 are extracellular; sequence AKILTVSLVG…HAFQQPWYEQ (461 aa). N52 is a glycosylation site (N-linked (GlcNAc...) asparagine). The chain crosses the membrane as a helical span at residues 484–504; sequence YLLDVFLFLLVVTLGTMWLCG. At 505 to 523 the chain is on the cytoplasmic side; it reads KLLGLVARWLCGARKLKKA.

The protein belongs to the UDP-glycosyltransferase family.

The protein resides in the membrane. It catalyses the reaction glucuronate acceptor + UDP-alpha-D-glucuronate = acceptor beta-D-glucuronoside + UDP + H(+). Its function is as follows. UDP-glucuronosyltransferases catalyze phase II biotransformation reactions in which lipophilic substrates are conjugated with glucuronic acid to increase water solubility and enhance excretion. They are of major importance in the conjugation and subsequent elimination of potentially toxic xenobiotics and endogenous compounds. This chain is UDP-glucuronosyltransferase 3A1 (UGT3A1), found in Bos taurus (Bovine).